Reading from the N-terminus, the 125-residue chain is Large ribosomal subunit protein bL12 (125 aa).

Belongs to the bacterial ribosomal protein bL12 family. Homodimer. Part of the ribosomal stalk of the 50S ribosomal subunit. Forms a multimeric L10(L12)X complex, where L10 forms an elongated spine to which 2 to 4 L12 dimers bind in a sequential fashion. Binds GTP-bound translation factors.

Forms part of the ribosomal stalk which helps the ribosome interact with GTP-bound translation factors. Is thus essential for accurate translation. In Helicobacter pylori (strain ATCC 700392 / 26695) (Campylobacter pylori), this protein is Large ribosomal subunit protein bL12.